Consider the following 145-residue polypeptide: MATGTFDIIHPGHGFYLKKAKELGGKNSKLVVIVARDSTVRARKRKPVINEKQRLEVVKMLKPVDEAYLGCEGDIFKTVEKIKPDIIALGPDQDFDEKELQKELKKRNIDCKVVRIKEYKKSPLDSTCKIIKKIKQMKFDDIEKC.

ATP contacts are provided by residues 5–6 (TF), 10–13 (HPGH), aspartate 92, and tyrosine 119.

Belongs to the archaeal FAD synthase family. In terms of assembly, homodimer. The cofactor is a divalent metal cation.

It carries out the reaction FMN + ATP + H(+) = FAD + diphosphate. The protein operates within cofactor biosynthesis; FAD biosynthesis; FAD from FMN: step 1/1. Its function is as follows. Catalyzes the transfer of the AMP portion of ATP to flavin mononucleotide (FMN) to produce flavin adenine dinucleotide (FAD) coenzyme. This Methanothermus fervidus (strain ATCC 43054 / DSM 2088 / JCM 10308 / V24 S) protein is FAD synthase.